Consider the following 152-residue polypeptide: Deoxyuridine 5'-triphosphate nucleotidohydrolase (152 aa).

Substrate is bound by residues 71-73, asparagine 84, 88-90, and methionine 98; these read RSG and LID.

The protein belongs to the dUTPase family. It depends on Mg(2+) as a cofactor.

The enzyme catalyses dUTP + H2O = dUMP + diphosphate + H(+). It participates in pyrimidine metabolism; dUMP biosynthesis; dUMP from dCTP (dUTP route): step 2/2. Its function is as follows. This enzyme is involved in nucleotide metabolism: it produces dUMP, the immediate precursor of thymidine nucleotides and it decreases the intracellular concentration of dUTP so that uracil cannot be incorporated into DNA. The polypeptide is Deoxyuridine 5'-triphosphate nucleotidohydrolase (Klebsiella pneumoniae (strain 342)).